A 146-amino-acid chain; its full sequence is VHLTAEEKSAVTALWAKVNVEEVGGEALGRLLVVYPWTQRFFEAFGDLSTADAVMKNPKVKAHGKKVLASFSDGLKHLDDLKGTFATLSELHCDKLHVDPENFRLLGNVLVIVLARHFGKEFTPELQAAYQKVVAGVANALAHKYH.

V1 is modified (N-acetylvaline). Residues 2–146 (HLTAEEKSAV…VANALAHKYH (145 aa)) form the Globin domain. T12 bears the Phosphothreonine mark. K59 is modified (N6-acetyllysine). H63 serves as a coordination point for heme b. K82 carries the post-translational modification N6-acetyllysine. H92 lines the heme b pocket. Position 93 is an S-nitrosocysteine (C93). Residue K144 is modified to N6-acetyllysine.

It belongs to the globin family. In terms of assembly, heterotetramer of two alpha chains and two beta chains. As to expression, red blood cells.

Its function is as follows. Involved in oxygen transport from the lung to the various peripheral tissues. This is Hemoglobin subunit beta (HBB) from Balaenoptera acutorostrata (Common minke whale).